We begin with the raw amino-acid sequence, 411 residues long: Tyrosine--tRNA ligase (411 aa).

The 'HIGH' region motif lies at 48–57; that stretch reads PTAPDIHLGH. The 'KMSKS' region motif lies at 232–236; sequence KMSKS. Lys235 lines the ATP pocket. The 63-residue stretch at 347-409 folds into the S4 RNA-binding domain; the sequence is VLLPKVLFSA…GKRRFLKIIF (63 aa).

The protein belongs to the class-I aminoacyl-tRNA synthetase family. TyrS type 2 subfamily. Homodimer.

It is found in the cytoplasm. The catalysed reaction is tRNA(Tyr) + L-tyrosine + ATP = L-tyrosyl-tRNA(Tyr) + AMP + diphosphate + H(+). Catalyzes the attachment of tyrosine to tRNA(Tyr) in a two-step reaction: tyrosine is first activated by ATP to form Tyr-AMP and then transferred to the acceptor end of tRNA(Tyr). The sequence is that of Tyrosine--tRNA ligase from Carboxydothermus hydrogenoformans (strain ATCC BAA-161 / DSM 6008 / Z-2901).